A 372-amino-acid chain; its full sequence is Queuine tRNA-ribosyltransferase (372 aa).

Aspartate 92 functions as the Proton acceptor in the catalytic mechanism. Residues 92-96, aspartate 146, glutamine 188, and glycine 215 each bind substrate; that span reads DSGGF. Positions 246 to 252 are RNA binding; it reads GIGTLRE. Aspartate 265 (nucleophile) is an active-site residue. The RNA binding; important for wobble base 34 recognition stretch occupies residues 270–274; it reads TRLGR. Zn(2+) is bound by residues cysteine 303, cysteine 305, cysteine 308, and histidine 334.

The protein belongs to the queuine tRNA-ribosyltransferase family. In terms of assembly, homodimer. Within each dimer, one monomer is responsible for RNA recognition and catalysis, while the other monomer binds to the replacement base PreQ1. Requires Zn(2+) as cofactor.

The catalysed reaction is 7-aminomethyl-7-carbaguanine + guanosine(34) in tRNA = 7-aminomethyl-7-carbaguanosine(34) in tRNA + guanine. The protein operates within tRNA modification; tRNA-queuosine biosynthesis. Functionally, catalyzes the base-exchange of a guanine (G) residue with the queuine precursor 7-aminomethyl-7-deazaguanine (PreQ1) at position 34 (anticodon wobble position) in tRNAs with GU(N) anticodons (tRNA-Asp, -Asn, -His and -Tyr). Catalysis occurs through a double-displacement mechanism. The nucleophile active site attacks the C1' of nucleotide 34 to detach the guanine base from the RNA, forming a covalent enzyme-RNA intermediate. The proton acceptor active site deprotonates the incoming PreQ1, allowing a nucleophilic attack on the C1' of the ribose to form the product. After dissociation, two additional enzymatic reactions on the tRNA convert PreQ1 to queuine (Q), resulting in the hypermodified nucleoside queuosine (7-(((4,5-cis-dihydroxy-2-cyclopenten-1-yl)amino)methyl)-7-deazaguanosine). This chain is Queuine tRNA-ribosyltransferase, found in Synechococcus sp. (strain CC9605).